A 302-amino-acid chain; its full sequence is Heme A synthase (302 aa).

The Cytoplasmic segment spans residues 1-8; the sequence is MFRKQNLK. Residues 9-29 traverse the membrane as a helical segment; that stretch reads WLGVLATIIMTFVQLGGALVT. Over 30–67 the chain is Extracellular; that stretch reads KTGSEDGCGSSWPLCNGALLPENLPIQTIIELSHRAVS. C37 and C44 are disulfide-bonded. The active site involves E60. Heme o is bound at residue H63. A helical transmembrane segment spans residues 68–88; the sequence is AISLIVVLWLVITAWKNIGYI. The Cytoplasmic segment spans residues 89–93; sequence KEIKP. Residues 94–114 traverse the membrane as a helical segment; the sequence is LSIISVGFLLVQALVGAAAVI. Over 115–125 the chain is Extracellular; the sequence is WQQNPYVLALH. H125 lines the heme o pocket. Residues 126 to 146 traverse the membrane as a helical segment; it reads FGISLISFSSVFLMTLIIFSI. At 147-161 the chain is on the cytoplasmic side; it reads DKKYEADILFIHKPL. A helical transmembrane segment spans residues 162–182; that stretch reads RILTWLMAIIVYLTIYTGALV. Residues 183 to 215 lie on the Extracellular side of the membrane; that stretch reads RHTKSSLAYGAWPIPFDDIVPHNAHDWVQFSHR. Position 214 (H214) interacts with heme b. The helical transmembrane segment at 216-236 threads the bilayer; it reads GMALITFIWIMITFIHAIKNY. Residues 237-244 are Cytoplasmic-facing; that stretch reads SDNRTVRY. The helical transmembrane segment at 245–265 threads the bilayer; that stretch reads GYTASFILVILQVITGALSVI. Over 266-270 the chain is Extracellular; it reads TNVNL. A helical transmembrane segment spans residues 271-291; sequence IIALFHALFITYLFGMIAYFI. H276 is a heme b binding site. Topologically, residues 292–302 are cytoplasmic; it reads LLMLRTTRSQK.

It belongs to the COX15/CtaA family. Type 1 subfamily. In terms of assembly, interacts with CtaB. Requires heme b as cofactor.

The protein resides in the cell membrane. The enzyme catalyses Fe(II)-heme o + 2 A + H2O = Fe(II)-heme a + 2 AH2. Its pathway is porphyrin-containing compound metabolism; heme A biosynthesis; heme A from heme O: step 1/1. Its function is as follows. Catalyzes the conversion of heme O to heme A by two successive hydroxylations of the methyl group at C8. The first hydroxylation forms heme I, the second hydroxylation results in an unstable dihydroxymethyl group, which spontaneously dehydrates, resulting in the formyl group of heme A. The chain is Heme A synthase from Staphylococcus epidermidis (strain ATCC 35984 / DSM 28319 / BCRC 17069 / CCUG 31568 / BM 3577 / RP62A).